Here is a 310-residue protein sequence, read N- to C-terminus: Transcription factor LRL2 (310 aa).

2 stretches are compositionally biased toward low complexity: residues methionine 1 to proline 20 and glutamine 104 to threonine 126. 2 disordered regions span residues methionine 1–phenylalanine 23 and phenylalanine 95–isoleucine 143. Residues glutamine 136–arginine 149 are basic motif; degenerate. Positions glutamine 136 to leucine 185 constitute a bHLH domain. The tract at residues glutamate 150–leucine 185 is helix-loop-helix motif. Residues alanine 203–lysine 225 form a disordered region.

In terms of assembly, homodimer. In terms of tissue distribution, expressed constitutively in roots, leaves, stems, and flowers.

Its subcellular location is the nucleus. Transcription factor that regulates the development of root hairs. Transcription factor that regulates the development of sperm cells. This is Transcription factor LRL2 from Arabidopsis thaliana (Mouse-ear cress).